The primary structure comprises 289 residues: Phosphatidylserine decarboxylase proenzyme (289 aa).

Catalysis depends on charge relay system; for autoendoproteolytic cleavage activity residues Asp-88, His-145, and Ser-251. The Schiff-base intermediate with substrate; via pyruvic acid; for decarboxylase activity role is filled by Ser-251. Ser-251 is modified (pyruvic acid (Ser); by autocatalysis).

This sequence belongs to the phosphatidylserine decarboxylase family. PSD-B subfamily. Prokaryotic type I sub-subfamily. In terms of assembly, heterodimer of a large membrane-associated beta subunit and a small pyruvoyl-containing alpha subunit. Pyruvate serves as cofactor. In terms of processing, is synthesized initially as an inactive proenzyme. Formation of the active enzyme involves a self-maturation process in which the active site pyruvoyl group is generated from an internal serine residue via an autocatalytic post-translational modification. Two non-identical subunits are generated from the proenzyme in this reaction, and the pyruvate is formed at the N-terminus of the alpha chain, which is derived from the carboxyl end of the proenzyme. The autoendoproteolytic cleavage occurs by a canonical serine protease mechanism, in which the side chain hydroxyl group of the serine supplies its oxygen atom to form the C-terminus of the beta chain, while the remainder of the serine residue undergoes an oxidative deamination to produce ammonia and the pyruvoyl prosthetic group on the alpha chain. During this reaction, the Ser that is part of the protease active site of the proenzyme becomes the pyruvoyl prosthetic group, which constitutes an essential element of the active site of the mature decarboxylase.

The protein localises to the cell membrane. The catalysed reaction is a 1,2-diacyl-sn-glycero-3-phospho-L-serine + H(+) = a 1,2-diacyl-sn-glycero-3-phosphoethanolamine + CO2. The protein operates within phospholipid metabolism; phosphatidylethanolamine biosynthesis; phosphatidylethanolamine from CDP-diacylglycerol: step 2/2. Functionally, catalyzes the formation of phosphatidylethanolamine (PtdEtn) from phosphatidylserine (PtdSer). The chain is Phosphatidylserine decarboxylase proenzyme from Polaromonas naphthalenivorans (strain CJ2).